We begin with the raw amino-acid sequence, 428 residues long: Glutamate-1-semialdehyde 2,1-aminomutase 1 (428 aa).

Lys267 is subject to N6-(pyridoxal phosphate)lysine.

The protein belongs to the class-III pyridoxal-phosphate-dependent aminotransferase family. HemL subfamily. As to quaternary structure, homodimer. The cofactor is pyridoxal 5'-phosphate.

The protein resides in the cytoplasm. The enzyme catalyses (S)-4-amino-5-oxopentanoate = 5-aminolevulinate. Its pathway is porphyrin-containing compound metabolism; protoporphyrin-IX biosynthesis; 5-aminolevulinate from L-glutamyl-tRNA(Glu): step 2/2. The polypeptide is Glutamate-1-semialdehyde 2,1-aminomutase 1 (hemL1) (Staphylococcus aureus (strain NCTC 8325 / PS 47)).